A 242-amino-acid chain; its full sequence is Protein crossbronx (242 aa).

In terms of domain architecture, UBC core spans 20-176; it reads QQEYKILAEY…VQENIKESKA (157 aa).

It belongs to the ubiquitin-conjugating enzyme family. FTS subfamily.

In Drosophila ananassae (Fruit fly), this protein is Protein crossbronx (cbx).